A 498-amino-acid chain; its full sequence is ATP synthase subunit alpha, chloroplastic (498 aa).

Residue 170–177 participates in ATP binding; it reads GDRQTGKT.

Belongs to the ATPase alpha/beta chains family. F-type ATPases have 2 components, CF(1) - the catalytic core - and CF(0) - the membrane proton channel. CF(1) has five subunits: alpha(3), beta(3), gamma(1), delta(1), epsilon(1). CF(0) has four main subunits: a, b, b' and c.

The protein resides in the plastid. Its subcellular location is the chloroplast thylakoid membrane. It carries out the reaction ATP + H2O + 4 H(+)(in) = ADP + phosphate + 5 H(+)(out). Functionally, produces ATP from ADP in the presence of a proton gradient across the membrane. The alpha chain is a regulatory subunit. This chain is ATP synthase subunit alpha, chloroplastic, found in Oltmannsiellopsis viridis (Marine flagellate).